A 467-amino-acid polypeptide reads, in one-letter code: Gamma-aminobutyric acid receptor subunit rho-3 (467 aa).

The signal sequence occupies residues 1–24 (MVLAFQLVSFTYIWIILKPNVCAA). Residues 25–266 (SNIKMTHQRC…LFINFVLRRH (242 aa)) lie on the Extracellular side of the membrane. 4-aminobutanoate contacts are provided by Arg111 and Ser175. Cys184 and Cys198 are oxidised to a cystine. Glu203 lines the 4-aminobutanoate pocket. Asn220 carries an N-linked (GlcNAc...) asparagine glycan. The helical transmembrane segment at 267-287 (VFFFVLQTYFPAILMVMLSWV) threads the bilayer. Residues 288–299 (SFWIDRRAVPAR) lie on the Cytoplasmic side of the membrane. Residues 300 to 320 (VSLGITTVLTMSTIITAVSAS) form a helical membrane-spanning segment. Residues 321–331 (MPQVSYLKAVD) are Extracellular-facing. A helical transmembrane segment spans residues 332–352 (VYLWVSSLFVFLSVIEYAAVN). The segment at 347-448 (EYAAVNYLTT…NNHVIDTYSR (102 aa)) is interaction with SQSTM1. The Cytoplasmic portion of the chain corresponds to 353 to 446 (YLTTVEERKQ…LENNHVIDTY (94 aa)). A helical transmembrane segment spans residues 447 to 467 (SRILFPIVYILFNLFYWGVYV).

The protein belongs to the ligand-gated ion channel (TC 1.A.9) family. Gamma-aminobutyric acid receptor (TC 1.A.9.5) subfamily. GABRR3 sub-subfamily. Three rho subunits (rho-1/GBRR1, rho-2/GBRR2 and rho-3/GBRR3) coassemble either to form functional homopentamers or heteropentamers. Forms a ternary complex with SQSTM1 and PRKCZ.

The protein localises to the postsynaptic cell membrane. It is found in the cell membrane. The enzyme catalyses chloride(in) = chloride(out). Inhibited by TPMPA, a rho-specific antagonist, when forming a homopentamer. Rho subunit of the pentameric ligand-gated chloride channels responsible for mediating the effects of gamma-aminobutyric acid (GABA), the major inhibitory neurotransmitter in the brain. Rho-containing GABA-gated chloride channels are a subclass of GABA(A) receptors (GABAARs) entirely composed of rho subunits, where GABA molecules bind at the rho intersubunit interfaces. When activated by GABA, rho-GABAARs selectively allow the flow of chloride anions across the cell membrane down their electrochemical gradient. In Homo sapiens (Human), this protein is Gamma-aminobutyric acid receptor subunit rho-3.